A 761-amino-acid polypeptide reads, in one-letter code: Elongation factor G, mitochondrial (761 aa).

The transit peptide at 1-42 (MSVQKMMWVPRKMVGGRIPFFTCSKVFSGFSRRSFHESPLAR) directs the protein to the mitochondrion. The 282-residue stretch at 68 to 349 (NKLRNIGISA…AIVDYLPNPS (282 aa)) folds into the tr-type G domain. GTP is bound by residues 77–84 (AHIDSGKT), 148–152 (DTPGH), and 202–205 (NKMD).

The protein belongs to the TRAFAC class translation factor GTPase superfamily. Classic translation factor GTPase family. EF-G/EF-2 subfamily. In terms of processing, the precursor is processed in two steps involving mitochondrial intermediate peptidase (MIP) and mitochondrial processing peptidase (MPP).

It is found in the mitochondrion. The protein operates within protein biosynthesis; polypeptide chain elongation. Mitochondrial GTPase that catalyzes the GTP-dependent ribosomal translocation step during translation elongation. During this step, the ribosome changes from the pre-translocational (PRE) to the post-translocational (POST) state as the newly formed A-site-bound peptidyl-tRNA and P-site-bound deacylated tRNA move to the P and E sites, respectively. Catalyzes the coordinated movement of the two tRNA molecules, the mRNA and conformational changes in the ribosome. This is Elongation factor G, mitochondrial from Saccharomyces cerevisiae (strain ATCC 204508 / S288c) (Baker's yeast).